A 142-amino-acid chain; its full sequence is Lysozyme X (142 aa).

Residues 1–19 (MRALLGICVLALVTPAVLG) form the signal peptide. The C-type lysozyme domain maps to 20–142 (RTMDRCSLAR…YLPPIDDCFV (123 aa)). Intrachain disulfides connect C25–C140, C46–C130, C81–C97, and C93–C111. Catalysis depends on residues E51 and D69.

Belongs to the glycosyl hydrolase 22 family. As to expression, found in the midgut.

It catalyses the reaction Hydrolysis of (1-&gt;4)-beta-linkages between N-acetylmuramic acid and N-acetyl-D-glucosamine residues in a peptidoglycan and between N-acetyl-D-glucosamine residues in chitodextrins.. In terms of biological role, unlikely to play an active role in the humoral immune defense. May have a function in the digestion of bacteria in the food. May be involved in the clearance of bacteria from the larval gut before metamorphosis. In Drosophila melanogaster (Fruit fly), this protein is Lysozyme X (LysX).